A 126-amino-acid polypeptide reads, in one-letter code: Histone H2B type 1-C/E/G (126 aa).

Over residues 1–12 (MPEPAKSAPAPK) the composition is skewed to low complexity. The tract at residues 1–36 (MPEPAKSAPAPKKGSKKAVTKAQKKDGKKRKRSRKE) is disordered. An N-acetylproline modification is found at Pro-2. At Glu-3 the chain carries ADP-ribosyl glutamic acid. Lys-6 is modified (N6-(2-hydroxyisobutyryl)lysine; alternate). Lys-6 bears the N6-(beta-hydroxybutyryl)lysine; alternate mark. Lys-6 is modified (N6-acetyllysine; alternate). At Lys-6 the chain carries N6-butyryllysine; alternate. At Lys-6 the chain carries N6-crotonyllysine; alternate. At Lys-6 the chain carries N6-lactoyllysine; alternate. Residue Lys-6 forms a Glycyl lysine isopeptide (Lys-Gly) (interchain with G-Cter in SUMO2); alternate linkage. Residue Ser-7 is modified to ADP-ribosylserine. The residue at position 12 (Lys-12) is an N6-(beta-hydroxybutyryl)lysine; alternate. 2 positions are modified to N6-acetyllysine; alternate: Lys-12 and Lys-13. N6-crotonyllysine; alternate is present on residues Lys-12 and Lys-13. At Lys-12 the chain carries N6-lactoyllysine; alternate. Lys-13 is subject to N6-(2-hydroxyisobutyryl)lysine; alternate. Ser-15 carries the post-translational modification Phosphoserine; by STK4/MST1. Lys-16, Lys-17, Lys-21, and Lys-24 each carry N6-acetyllysine; alternate. Lys-16, Lys-17, Lys-21, and Lys-24 each carry N6-crotonyllysine; alternate. N6-lactoyllysine; alternate is present on residues Lys-16, Lys-17, Lys-21, and Lys-24. Lys-17 carries the N6-glutaryllysine; alternate modification. 2 positions are modified to N6-(2-hydroxyisobutyryl)lysine; alternate: Lys-21 and Lys-24. The residue at position 21 (Lys-21) is an N6-(beta-hydroxybutyryl)lysine; alternate. At Lys-21 the chain carries N6-butyryllysine; alternate. A Glycyl lysine isopeptide (Lys-Gly) (interchain with G-Cter in SUMO2); alternate cross-link involves residue Lys-21. Lys-25 is subject to N6-(2-hydroxyisobutyryl)lysine. Lys-35 carries the post-translational modification N6-(2-hydroxyisobutyryl)lysine; alternate. Position 35 is an N6-(beta-hydroxybutyryl)lysine; alternate (Lys-35). Lys-35 carries the N6-crotonyllysine; alternate modification. Lys-35 bears the N6-glutaryllysine; alternate mark. The residue at position 35 (Lys-35) is an N6-succinyllysine; alternate. Lys-35 participates in a covalent cross-link: Glycyl lysine isopeptide (Lys-Gly) (interchain with G-Cter in ubiquitin); alternate. Residue Glu-36 is modified to PolyADP-ribosyl glutamic acid. Residue Ser-37 is modified to Phosphoserine; by AMPK. Residues Lys-44, Lys-47, and Lys-58 each carry the N6-(2-hydroxyisobutyryl)lysine; alternate modification. Lys-44 carries the post-translational modification N6-lactoyllysine; alternate. An N6-glutaryllysine; alternate mark is found at Lys-44 and Lys-47. Residue Lys-47 is modified to N6-methyllysine; alternate. N6,N6-dimethyllysine; alternate is present on Lys-58. Residue Arg-80 is modified to Dimethylated arginine. An N6-(2-hydroxyisobutyryl)lysine; alternate modification is found at Lys-86. Lys-86 is modified (N6-acetyllysine; alternate). Lys-86 carries the N6-lactoyllysine; alternate modification. Lys-86 bears the N6,N6,N6-trimethyllysine; alternate mark. Residues Arg-87 and Arg-93 each carry the omega-N-methylarginine modification. Position 109 is an N6-(2-hydroxyisobutyryl)lysine; alternate (Lys-109). The residue at position 109 (Lys-109) is an N6-(beta-hydroxybutyryl)lysine; alternate. Lys-109 is modified (N6-lactoyllysine; alternate). At Lys-109 the chain carries N6-glutaryllysine; alternate. Residue Lys-109 is modified to N6-methyllysine; alternate. O-linked (GlcNAc) serine glycosylation is present at Ser-113. Thr-116 carries the phosphothreonine modification. 2 positions are modified to N6-(2-hydroxyisobutyryl)lysine; alternate: Lys-117 and Lys-121. Lys-117 carries the post-translational modification N6-(beta-hydroxybutyryl)lysine; alternate. Residues Lys-117 and Lys-121 each carry the N6-lactoyllysine; alternate modification. N6-glutaryllysine; alternate occurs at positions 117 and 121. An N6-succinyllysine; alternate mark is found at Lys-117 and Lys-121. Lys-117 is subject to N6-methylated lysine; alternate. Lys-121 participates in a covalent cross-link: Glycyl lysine isopeptide (Lys-Gly) (interchain with G-Cter in ubiquitin); alternate.

The protein belongs to the histone H2B family. In terms of assembly, the nucleosome is a histone octamer containing two molecules each of H2A, H2B, H3 and H4 assembled in one H3-H4 heterotetramer and two H2A-H2B heterodimers. The octamer wraps approximately 147 bp of DNA. Interacts with VRK1; the interaction is mediated by the nucleosome acidic patch, a cluster of negatively charged residues of H2A and H2B forming a cleft within the nucleosome core. Post-translationally, monoubiquitination at Lys-35 (H2BK34Ub) by the MSL1/MSL2 dimer is required for histone H3 'Lys-4' (H3K4me) and 'Lys-79' (H3K79me) methylation and transcription activation at specific gene loci, such as HOXA9 and MEIS1 loci. Similarly, monoubiquitination at Lys-121 (H2BK120Ub) by the RNF20/40 complex gives a specific tag for epigenetic transcriptional activation and is also prerequisite for histone H3 'Lys-4' and 'Lys-79' methylation. It also functions cooperatively with the FACT dimer to stimulate elongation by RNA polymerase II. H2BK120Ub also acts as a regulator of mRNA splicing: deubiquitination by USP49 is required for efficient cotranscriptional splicing of a large set of exons. In terms of processing, phosphorylated on Ser-15 (H2BS14ph) by STK4/MST1 during apoptosis; which facilitates apoptotic chromatin condensation. Also phosphorylated on Ser-15 in response to DNA double strand breaks (DSBs), and in correlation with somatic hypermutation and immunoglobulin class-switch recombination. Phosphorylation at Ser-37 (H2BS36ph) by AMPK in response to stress promotes transcription. GlcNAcylation at Ser-113 promotes monoubiquitination of Lys-121. It fluctuates in response to extracellular glucose, and associates with transcribed genes. Post-translationally, ADP-ribosylated by PARP1 or PARP2 on Ser-7 (H2BS6ADPr) in response to DNA damage. H2BS6ADPr promotes recruitment of CHD1L. Mono-ADP-ribosylated on Glu-3 (H2BE2ADPr) by PARP3 in response to single-strand breaks. Poly ADP-ribosylation on Glu-36 (H2BE35ADPr) by PARP1 regulates adipogenesis: it inhibits phosphorylation at Ser-37 (H2BS36ph), thereby blocking expression of pro-adipogenetic genes. In terms of processing, crotonylation (Kcr) is specifically present in male germ cells and marks testis-specific genes in post-meiotic cells, including X-linked genes that escape sex chromosome inactivation in haploid cells. Crotonylation marks active promoters and enhancers and confers resistance to transcriptional repressors. It is also associated with post-meiotically activated genes on autosomes. Hydroxybutyrylation of histones is induced by starvation. Post-translationally, lactylated in macrophages by EP300/P300 by using lactoyl-CoA directly derived from endogenous or exogenous lactate, leading to stimulates gene transcription.

The protein localises to the nucleus. Its subcellular location is the chromosome. In terms of biological role, core component of nucleosome. Nucleosomes wrap and compact DNA into chromatin, limiting DNA accessibility to the cellular machineries which require DNA as a template. Histones thereby play a central role in transcription regulation, DNA repair, DNA replication and chromosomal stability. DNA accessibility is regulated via a complex set of post-translational modifications of histones, also called histone code, and nucleosome remodeling. This chain is Histone H2B type 1-C/E/G, found in Mus musculus (Mouse).